We begin with the raw amino-acid sequence, 175 residues long: Large ribosomal subunit protein uL10 (175 aa).

It belongs to the universal ribosomal protein uL10 family. In terms of assembly, part of the ribosomal stalk of the 50S ribosomal subunit. The N-terminus interacts with L11 and the large rRNA to form the base of the stalk. The C-terminus forms an elongated spine to which L12 dimers bind in a sequential fashion forming a multimeric L10(L12)X complex.

In terms of biological role, forms part of the ribosomal stalk, playing a central role in the interaction of the ribosome with GTP-bound translation factors. This is Large ribosomal subunit protein uL10 from Psychrobacter arcticus (strain DSM 17307 / VKM B-2377 / 273-4).